Consider the following 307-residue polypeptide: Ribosomal protein L11 methyltransferase (307 aa).

Residues T162, G183, D205, and N244 each coordinate S-adenosyl-L-methionine.

The protein belongs to the methyltransferase superfamily. PrmA family.

The protein localises to the cytoplasm. It carries out the reaction L-lysyl-[protein] + 3 S-adenosyl-L-methionine = N(6),N(6),N(6)-trimethyl-L-lysyl-[protein] + 3 S-adenosyl-L-homocysteine + 3 H(+). Methylates ribosomal protein L11. In Bordetella bronchiseptica (strain ATCC BAA-588 / NCTC 13252 / RB50) (Alcaligenes bronchisepticus), this protein is Ribosomal protein L11 methyltransferase.